A 90-amino-acid polypeptide reads, in one-letter code: Histone H1.M6.2 (90 aa).

Residues 1 to 90 (MSDAAVPPKK…KAVKKAPKKK (90 aa)) form a disordered region. Residues 11–90 (ASPKKAAAKK…KAVKKAPKKK (80 aa)) show a composition bias toward basic residues.

It is found in the nucleus. The protein localises to the chromosome. This chain is Histone H1.M6.2, found in Trypanosoma cruzi.